The chain runs to 506 residues: Tyrosine-protein phosphatase non-receptor type substrate 1 (506 aa).

The N-terminal stretch at 1 to 29 (MEPARPAPGRLRPLLCLLLAASNAWTGTA) is a signal peptide. Residues 30–145 (GDGELQVIQP…SGPGTHLTVS (116 aa)) form the Ig-like V-type domain. The Extracellular segment spans residues 30 to 371 (GDGELQVIQP…PGPNDSNWTS (342 aa)). A disulfide bond links Cys-55 and Cys-121. An N-linked (GlcNAc...) asparagine glycan is attached at Asn-92. The interval 136 to 159 (SGPGTHLTVSAKPSPPVLSGPTVR) is disordered. Ig-like C1-type domains lie at 148–248 (PSPP…ANLS) and 255–348 (PTLE…HTLE). N-linked (GlcNAc...) asparagine glycosylation is found at Asn-167, Asn-179, Asn-204, Asn-210, Asn-246, Asn-270, Asn-292, Asn-311, Asn-319, Asn-344, Asn-365, and Asn-368. Cys-170 and Cys-228 are oxidised to a cystine. A disulfide bond links Cys-273 and Cys-331. Residues 344 to 364 (NHTLEVSAPQKDQDTGQTPGP) are disordered. The helical transmembrane segment at 372-392 (IFIVVGVVCALLVALLIAALY) threads the bilayer. The Cytoplasmic portion of the chain corresponds to 393–506 (LLRIRQNKAK…EYASVQVQRK (114 aa)). The disordered stretch occupies residues 402–468 (KGSTSSTRLH…QARPPPVSED (67 aa)). Over residues 409–418 (RLHEPEKNTR) the composition is skewed to basic and acidic residues. The segment covering 419 to 429 (ETTQIQDNNDI) has biased composition (polar residues). Residue Tyr-431 is modified to Phosphotyrosine; by Tyr-kinases. Residues 432 to 435 (ADLN) carry the SH2-binding motif. Residues 441 to 446 (KSTPKA) carry the SH3-binding motif. A compositionally biased stretch (polar residues) spans 444–456 (PKANEPNNHTEYA). Residues Tyr-455, Tyr-472, and Tyr-498 each carry the phosphotyrosine; by Tyr-kinases modification. 3 short sequence motifs (SH2-binding) span residues 455–458 (YASI), 472–475 (YADL), and 498–501 (YASV). Residues 480–506 (LNRTPKQPAPKPEPSYSEYASVQVQRK) form a disordered region. Polar residues predominate over residues 497–506 (EYASVQVQRK).

In terms of assembly, binds PTPN11 when tyrosine-phosphorylated, except in macrophages, where it primarily binds PTPN6. Binds GRB2 in vitro. Binds JAK2 irrespective of its phosphorylation status and forms a stable complex. Binds SCAP1 and/or SCAP2. The resulting complex recruits FYB1. Binds FGR and PTK2B. Interacts with TRIM2. Phosphorylated on tyrosine residues. As to expression, highly expressed in spleen macrophages. Detected in skin dendritic cells.

It localises to the membrane. Functionally, immunoglobulin-like cell surface receptor for CD47. Acts as docking protein and induces translocation of PTPN6, PTPN11 and other binding partners from the cytosol to the plasma membrane. Supports adhesion of cerebellar neurons, neurite outgrowth and glial cell attachment. May play a key role in intracellular signaling during synaptogenesis and in synaptic function. Involved in the negative regulation of receptor tyrosine kinase-coupled cellular responses induced by cell adhesion, growth factors or insulin. Mediates negative regulation of phagocytosis, mast cell activation and dendritic cell activation. CD47 binding prevents maturation of immature dendritic cells and inhibits cytokine production by mature dendritic cells. Plays a role in antiviral immunity and limits new world arenavirus infection by decreasing virus internalization. Receptor for THBS1. Interaction with THBS1 stimulates phosphorylation of SIRPA. In response to THBS1, involved in ROS signaling in non-phagocytic cells, stimulating NADPH oxidase-derived ROS production. In Bos taurus (Bovine), this protein is Tyrosine-protein phosphatase non-receptor type substrate 1 (SIRPA).